The primary structure comprises 492 residues: Signal transduction histidine-protein kinase/phosphatase MprB (492 aa).

Over 1 to 27 the chain is Cytoplasmic; that stretch reads MAFPPNSWRPTGPLPTSSLSLRWRVMM. A helical transmembrane segment spans residues 28 to 48; it reads LAMSMVALVVVLMAVAVYAVV. Residues 49 to 165 are Extracellular-facing; that stretch reads SRALYDDLDN…TVQVLRRLGT (117 aa). Residues 166 to 186 form a helical membrane-spanning segment; sequence VLLIVGGIGVAVAAIAGGAVA. Residues 187 to 239 enclose the HAMP domain; the sequence is RAGLRPVGRLTEAAERVARTDDLRPIPVVGSDELARLTEAFNMMLRALAESRE. The Cytoplasmic segment spans residues 187–492; that stretch reads RAGLRPVGRL…DRGGHTVATE (306 aa). The region spanning 247-467 is the Histidine kinase domain; sequence DAGHELRTPL…SVHMLLPGQR (221 aa). Position 250 is a phosphohistidine; by autocatalysis (H250). A disordered region spans residues 470-492; it reads DPGATRSAEGFVDDRGGHTVATE.

It depends on Mg(2+) as a cofactor. Mn(2+) is required as a cofactor. In terms of processing, autophosphorylated.

Its subcellular location is the cell membrane. It carries out the reaction ATP + protein L-histidine = ADP + protein N-phospho-L-histidine.. Its function is as follows. Member of the two-component regulatory system MprB/MprA which contributes to maintaining a balance among several systems involved in stress resistance and is required for establishment and maintenance of persistent infection in the host. In response to environmental signals MprB acts both as a membrane-associated protein kinase that undergoes autophosphorylation and subsequently transfers the phosphate to MprA, and a protein phosphatase that dephosphorylates phospho-MprA. In Mycolicibacterium smegmatis (strain ATCC 700084 / mc(2)155) (Mycobacterium smegmatis), this protein is Signal transduction histidine-protein kinase/phosphatase MprB (mprB).